The chain runs to 207 residues: Cyclic di-AMP synthase CdaS (207 aa).

A coiled-coil region spans residues 13 to 37; the sequence is AFKGKIQVYLEQILGDASLILKTLH. The region spanning 63–205 is the DAC domain; the sequence is SFYLQSYIEE…DGVLYPLISP (143 aa).

This sequence belongs to the adenylate cyclase family. DacB/CdaS subfamily. As to quaternary structure, forms dimers and probably also hexamers; the dimer may be active while the hexamer may not be active.

The catalysed reaction is 2 ATP = 3',3'-c-di-AMP + 2 diphosphate. Functionally, one of 3 paralogous diadenylate cyclases (DAC) in this bacteria, catalyzing the condensation of 2 ATP molecules into cyclic di-AMP (c-di-AMP). Upon expression in E.coli leads to c-di-AMP synthesis. Overexpression of the hyperactive mutant (L44F) in the absence of c-di-AMP phosphodiesterase GdpP leads to growth defects in log phase (long curly cell filaments) that disappear upon sporulation; spore formation is normal, showing sporulation is insensitive to the excess c-di-AMP. In B.subtilis c-di-AMP is a second messenger that mediates growth, DNA repair and cell wall homeostasis; it is toxic when present in excess. The protein is Cyclic di-AMP synthase CdaS of Bacillus subtilis (strain 168).